Reading from the N-terminus, the 572-residue chain is Proline--tRNA ligase (572 aa).

The protein belongs to the class-II aminoacyl-tRNA synthetase family. ProS type 1 subfamily. Homodimer.

The protein localises to the cytoplasm. It carries out the reaction tRNA(Pro) + L-proline + ATP = L-prolyl-tRNA(Pro) + AMP + diphosphate. Functionally, catalyzes the attachment of proline to tRNA(Pro) in a two-step reaction: proline is first activated by ATP to form Pro-AMP and then transferred to the acceptor end of tRNA(Pro). As ProRS can inadvertently accommodate and process non-cognate amino acids such as alanine and cysteine, to avoid such errors it has two additional distinct editing activities against alanine. One activity is designated as 'pretransfer' editing and involves the tRNA(Pro)-independent hydrolysis of activated Ala-AMP. The other activity is designated 'posttransfer' editing and involves deacylation of mischarged Ala-tRNA(Pro). The misacylated Cys-tRNA(Pro) is not edited by ProRS. The chain is Proline--tRNA ligase from Salmonella choleraesuis (strain SC-B67).